The following is a 216-amino-acid chain: GTP cyclohydrolase-2 (216 aa).

Residue 50–54 participates in GTP binding; the sequence is RIHSE. 3 residues coordinate Zn(2+): cysteine 55, cysteine 66, and cysteine 68. Residues glutamine 71, 93-95, and threonine 115 contribute to the GTP site; that span reads EGR. Aspartate 127 (proton acceptor) is an active-site residue. Arginine 129 acts as the Nucleophile in catalysis. Residues threonine 150 and lysine 155 each contribute to the GTP site.

It belongs to the GTP cyclohydrolase II family. The cofactor is Zn(2+).

The enzyme catalyses GTP + 4 H2O = 2,5-diamino-6-hydroxy-4-(5-phosphoribosylamino)-pyrimidine + formate + 2 phosphate + 3 H(+). It participates in cofactor biosynthesis; riboflavin biosynthesis; 5-amino-6-(D-ribitylamino)uracil from GTP: step 1/4. Functionally, catalyzes the conversion of GTP to 2,5-diamino-6-ribosylamino-4(3H)-pyrimidinone 5'-phosphate (DARP), formate and pyrophosphate. The polypeptide is GTP cyclohydrolase-2 (Histophilus somni (strain 129Pt) (Haemophilus somnus)).